Consider the following 570-residue polypeptide: GTPase Obg (570 aa).

The region spanning 2-168 (SDFVDRVTVH…RDIILELKSI (167 aa)) is the Obg domain. A disordered region spans residues 15–43 (GDGGNGSAGIRREKYKPLAGPNGGNGGKG). The region spanning 169-349 (ADVALVGFPS…LNFALAKLVK (181 aa)) is the OBG-type G domain. Residues 175 to 182 (GFPSAGKS), 200 to 204 (FTTLV), 221 to 224 (DVPG), 301 to 304 (NKID), and 330 to 332 (STA) each bind GTP. The Mg(2+) site is built by Ser182 and Thr202. One can recognise an OCT domain in the interval 382-468 (GRNAQVREFE…ERAVAFDWDP (87 aa)). The disordered stretch occupies residues 521–570 (RAAMQAERAAGHWADPSIDDDRHDEQSLFGRGEVEEYEDEPGADGSRQLD).

The protein belongs to the TRAFAC class OBG-HflX-like GTPase superfamily. OBG GTPase family. Monomer. It depends on Mg(2+) as a cofactor.

The protein resides in the cytoplasm. Its function is as follows. An essential GTPase which binds GTP, GDP and possibly (p)ppGpp with moderate affinity, with high nucleotide exchange rates and a fairly low GTP hydrolysis rate. Plays a role in control of the cell cycle, stress response, ribosome biogenesis and in those bacteria that undergo differentiation, in morphogenesis control. The protein is GTPase Obg of Bifidobacterium animalis subsp. lactis (strain AD011).